An 863-amino-acid chain; its full sequence is Leucine--tRNA ligase (863 aa).

A 'HIGH' region motif is present at residues 42–52 (PYPSGRLHMGH). Residues 622 to 626 (KMSKS) carry the 'KMSKS' region motif. Residue Lys625 participates in ATP binding.

Belongs to the class-I aminoacyl-tRNA synthetase family.

It is found in the cytoplasm. It carries out the reaction tRNA(Leu) + L-leucine + ATP = L-leucyl-tRNA(Leu) + AMP + diphosphate. The chain is Leucine--tRNA ligase from Shewanella frigidimarina (strain NCIMB 400).